The sequence spans 275 residues: Collectin-10 (275 aa).

The first 25 residues, 1–25 (MKYGKLWPIGVSVLGVIALHVRVLS), serve as a signal peptide directing secretion. Asparagine 30 carries an N-linked (GlcNAc...) asparagine glycan. A disordered region spans residues 39–76 (THTILPGPKGDDGEAGDTGVLGKLGKDGPKGQKGNKGI). The 60-residue stretch at 51-110 (GEAGDTGVLGKLGKDGPKGQKGNKGIIGDSGDLGLIGKIGPIGSKGDKGHKGLPGLPGGK) folds into the Collagen-like domain. A C-type lectin domain is found at 153–269 (TDEKYYYIVR…CSLTIYFVCE (117 aa)). Disulfide bonds link cysteine 174-cysteine 268 and cysteine 246-cysteine 260.

This sequence belongs to the COLEC10/COLEC11 family.

It is found in the secreted. Functionally, lectin that binds to various sugars: galactose &gt; mannose = fucose &gt; N-acetylglucosamine &gt; N-acetylgalactosamine. The chain is Collectin-10 (colec10) from Xenopus tropicalis (Western clawed frog).